The primary structure comprises 434 residues: 4-hydroxy-3-methylbut-2-en-1-yl diphosphate synthase (flavodoxin) (434 aa).

Over residues 1–15 (MQSEAQSPRSSQICS) the composition is skewed to polar residues. A disordered region spans residues 1–24 (MQSEAQSPRSSQICSTEPVFGGHQ). Cys-322, Cys-325, Cys-368, and Glu-375 together coordinate [4Fe-4S] cluster.

The protein belongs to the IspG family. [4Fe-4S] cluster is required as a cofactor.

It carries out the reaction (2E)-4-hydroxy-3-methylbut-2-enyl diphosphate + oxidized [flavodoxin] + H2O + 2 H(+) = 2-C-methyl-D-erythritol 2,4-cyclic diphosphate + reduced [flavodoxin]. The protein operates within isoprenoid biosynthesis; isopentenyl diphosphate biosynthesis via DXP pathway; isopentenyl diphosphate from 1-deoxy-D-xylulose 5-phosphate: step 5/6. Converts 2C-methyl-D-erythritol 2,4-cyclodiphosphate (ME-2,4cPP) into 1-hydroxy-2-methyl-2-(E)-butenyl 4-diphosphate. This chain is 4-hydroxy-3-methylbut-2-en-1-yl diphosphate synthase (flavodoxin), found in Burkholderia ambifaria (strain MC40-6).